The primary structure comprises 839 residues: Homeobox-leucine zipper protein HOX10 (839 aa).

Disordered regions lie at residues 1–24 (MAAA…SGMD) and 132–157 (QNTP…RDAS). The segment at residues 24-87 (DSGKYVRYTP…NRRCRDKQRK (64 aa)) is a DNA-binding region (homeobox). A coiled-coil region spans residues 91–134 (RLQAVNRKLTAMNKLLMEENERLQKQVSQLVHENAHMRQQLQNT). Residues 155 to 383 (DASNPSGLLS…IAQETSGEVV (229 aa)) form the START domain.

This sequence belongs to the HD-ZIP homeobox family. Class III subfamily. In terms of tissue distribution, expressed in stems, leaf sheaths and blades and panicles.

It is found in the nucleus. Functionally, probable transcription factor. The sequence is that of Homeobox-leucine zipper protein HOX10 (HOX10) from Oryza sativa subsp. japonica (Rice).